We begin with the raw amino-acid sequence, 266 residues long: Cell division cycle-associated protein 3 (266 aa).

Positions 1 to 84 (MGSTQSVSGT…TPMKISGPDP (84 aa)) are disordered. Phosphoserine occurs at positions 29 and 31. Residues 32–46 (AGIQRTPIQVESSPQ) are compositionally biased toward polar residues. Position 37 is a phosphothreonine (Thr-37). A phosphoserine mark is found at Ser-44 and Ser-67. Thr-75 is subject to Phosphothreonine. The F-box-like stretch occupies residues 90 to 119 (KELSEVLETEASESISSPELALPRETPLFY). Ser-93 is subject to Phosphoserine. 2 disordered regions span residues 120-225 (DLDL…LSEN) and 242-266 (KAGGGAREPNQDHDKENQHFALLES). The span at 143–156 (LDPKQVFTKEEAKQ) shows a compositional bias: basic and acidic residues. Residues 157–168 (SAETIAASQNSD) are compositionally biased toward polar residues. Ser-197 carries the phosphoserine modification. A Phosphothreonine modification is found at Thr-200. The segment covering 203-213 (QDDNSPGTLTL) has biased composition (polar residues). Ser-207 is modified (phosphoserine). The residue at position 210 (Thr-210) is a Phosphothreonine. The span at 250-259 (PNQDHDKENQ) shows a compositional bias: basic and acidic residues. Residues 256–258 (KEN) carry the KEN box motif.

Interacts with SKP1. Part of a SCF (SKP1-cullin-F-box) protein ligase complex. In terms of processing, ubiquitinated and degraded by the APC/C-Cdh1 complex.

It is found in the cytoplasm. Its subcellular location is the cytosol. It participates in protein modification; protein ubiquitination. Functionally, F-box-like protein which is required for entry into mitosis. Acts by participating in E3 ligase complexes that mediate the ubiquitination and degradation of WEE1 kinase at G2/M phase. The protein is Cell division cycle-associated protein 3 (Cdca3) of Mus musculus (Mouse).